Here is a 398-residue protein sequence, read N- to C-terminus: Argininosuccinate synthase (398 aa).

Position 9-17 (9-17 (AYSGGLDTS)) interacts with ATP. Residues Tyr-87 and Ser-92 each coordinate L-citrulline. Gly-117 contributes to the ATP binding site. L-aspartate contacts are provided by Thr-119, Asn-123, and Asp-124. Residue Asn-123 coordinates L-citrulline. L-citrulline is bound by residues Arg-127, Ser-176, Ser-185, Glu-261, and Tyr-273.

The protein belongs to the argininosuccinate synthase family. Type 1 subfamily. In terms of assembly, homotetramer.

It localises to the cytoplasm. The enzyme catalyses L-citrulline + L-aspartate + ATP = 2-(N(omega)-L-arginino)succinate + AMP + diphosphate + H(+). It participates in amino-acid biosynthesis; L-arginine biosynthesis; L-arginine from L-ornithine and carbamoyl phosphate: step 2/3. This Clostridium tetani (strain Massachusetts / E88) protein is Argininosuccinate synthase.